The sequence spans 493 residues: Serine/threonine-protein kinase 3 (493 aa).

The Protein kinase domain occupies 26–277 (FDVLEKLGEG…ATQLLQHPFI (252 aa)). Residues 32 to 40 (LGEGSYGSV) and Lys55 contribute to the ATP site. Residue Asp145 is the Proton acceptor of the active site. Residue Thr179 is modified to Phosphothreonine; by autocatalysis. The stretch at 286 to 327 (LRDLITEAMDIKAKRHEELQRELEEEDENSEEDELDSHTMVK) forms a coiled coil. Disordered regions lie at residues 303 to 336 (ELQR…AGTM) and 369 to 414 (DDEE…NCNQ). Residues 308–320 (LEEEDENSEEDEL) are compositionally biased toward acidic residues. Over residues 325–336 (MVKTNSESAGTM) the composition is skewed to polar residues. A compositionally biased stretch (acidic residues) spans 369 to 378 (DDEEEEEEED). Residues 398–410 (YFDKQDSKNKPHD) show a composition bias toward basic and acidic residues. The region spanning 439–486 (FDFLKNLSFEELQMRLKALDPMMEREIEDLRQRYNAKRQPILDAMDAK) is the SARAH domain. A coiled-coil region spans residues 444 to 477 (NLSFEELQMRLKALDPMMEREIEDLRQRYNAKRQ).

The protein belongs to the protein kinase superfamily. STE Ser/Thr protein kinase family. STE20 subfamily. In terms of assembly, homodimer; mediated via the coiled-coil region. Mg(2+) is required as a cofactor.

It localises to the cytoplasm. The protein localises to the nucleus. It carries out the reaction L-seryl-[protein] + ATP = O-phospho-L-seryl-[protein] + ADP + H(+). The catalysed reaction is L-threonyl-[protein] + ATP = O-phospho-L-threonyl-[protein] + ADP + H(+). With respect to regulation, inhibited by the C-terminal non-catalytic region. Activated by caspase-cleavage. Full activation also requires homodimerization and autophosphorylation of Thr-179. Stress-activated, pro-apoptotic kinase which, following caspase-cleavage, enters the nucleus and induces chromatin condensation followed by internucleosomal DNA fragmentation. Key component of the Hippo signaling pathway which plays a pivotal role in organ size control and tumor suppression by restricting proliferation and promoting apoptosis. The core of this pathway is composed of a kinase cascade wherein stk3/mst2 and stk4/mst1, in complex with its regulatory protein sav1, phosphorylates and activates lats1/2 in complex with its regulatory protein mob1, which in turn phosphorylates and inactivates yap1 oncoprotein and wwtr1/taz. Phosphorylation of yap1 by lats2 inhibits its translocation into the nucleus to regulate cellular genes important for cell proliferation, cell death, and cell migration. This chain is Serine/threonine-protein kinase 3 (stk3), found in Xenopus laevis (African clawed frog).